Here is an 89-residue protein sequence, read N- to C-terminus: Large ribosomal subunit protein uL23cz/uL23cy (89 aa).

Belongs to the universal ribosomal protein uL23 family. In terms of assembly, part of the 50S ribosomal subunit.

It localises to the plastid. Its subcellular location is the chloroplast. In terms of biological role, binds to 23S rRNA. This Calycanthus floridus var. glaucus (Eastern sweetshrub) protein is Large ribosomal subunit protein uL23cz/uL23cy (rpl23-A).